Reading from the N-terminus, the 375-residue chain is Tyrosine--tRNA ligase (375 aa).

The L-tyrosine site is built by Y37, Y168, Q172, D175, and Q190. A 'KMSKS' region motif is present at residues 251–255 (KMSKS). K254 is an ATP binding site.

This sequence belongs to the class-I aminoacyl-tRNA synthetase family. TyrS type 4 subfamily. In terms of assembly, homodimer.

The protein resides in the cytoplasm. The enzyme catalyses tRNA(Tyr) + L-tyrosine + ATP = L-tyrosyl-tRNA(Tyr) + AMP + diphosphate + H(+). Functionally, catalyzes the attachment of tyrosine to tRNA(Tyr) in a two-step reaction: tyrosine is first activated by ATP to form Tyr-AMP and then transferred to the acceptor end of tRNA(Tyr). In Thermococcus onnurineus (strain NA1), this protein is Tyrosine--tRNA ligase.